The sequence spans 324 residues: Appendage-associated protein (324 aa).

Positions 1-32 (MGCPVSRGGSPGCGRRIAEELRLAEDARLRLA) are cleaved as a signal peptide. Residues 195–255 (IAQAKEIAQA…AADKLQALGK (61 aa)) adopt a coiled-coil conformation.

It localises to the secreted. Its function is as follows. Associates with actin filament appendages that are formed in the inclusion appendages of the parasitophorous vacuole during infection of the host erythrocyte. The sequence is that of Appendage-associated protein (aaaP1) from Anaplasma marginale (strain Florida).